The following is a 493-amino-acid chain: Trichothecene 8-O-acetyltransferase (493 aa).

The segment covering 180–191 (QDQNENEVQQPK) has biased composition (polar residues). The segment at 180 to 199 (QDQNENEVQQPKNLPDPDEP) is disordered.

The protein operates within sesquiterpene biosynthesis; trichothecene biosynthesis. Its function is as follows. Trichothecene 8-O-acetyltransferase; part of 2-gene cluster involved in trichothecene C-8 modification that mediates the biosynthesis of T2-toxin. The biosynthesis of trichothecenes begins with the cyclization of farnesyl diphosphate to trichodiene and is catalyzed by the trichodiene synthase TRI5. Trichodiene undergoes a series of oxygenations catalyzed by the cytochrome P450 monooxygenase TRI4. TRI4 controls the addition of four oxygens at C-2, C-3, C-11, and the C-12, C-13-epoxide to form the intermediate isotrichotriol. Isotrichotriol then undergoes a non-enzymatic isomerization and cyclization to form isotrichodermol. During this process, the oxygen at the C-2 position becomes the pyran ring oxygen and the hydroxyl group at C-11 is lost. More complex type A trichothecenes are built by modifying isotrichodermol through a series of paired hydroxylation and acetylation or acylation steps. Isotrichodermol is converted to isotrichodermin by the acetyltransferase TRI101. TRI101 encodes a C-3 transacetylase that acts as a self-protection or resistance factor during biosynthesis and that the presence of a free C-3 hydroxyl group is a key component of Fusarium trichothecene phytotoxicity. A second hydroxyl group is added to C-15 by the trichothecene C-15 hydroxylase TRI11, producing 15-decalonectrin, which is then acetylated by TRI3, producing calonectrin. A third hydroxyl group is added at C-4 by the cytochrome P450 monooxygenase TRI13, converting calonectrin to 3,15-diacetoxyspirpenol, which is subsequently acetylated bythe acetyltransferase TRI7. A fourth hydroxyl group is added to C-8 by the cytochrome P450 monooxygenase TRI1, followed by the addition of an isovaleryl moiety by TRI16. Finally, the acetyl group is removed from the C-3 position by the trichothecene C-3 esterase TRI8 to produce T-2 toxin. The protein is Trichothecene 8-O-acetyltransferase of Fusarium sporotrichioides.